The chain runs to 172 residues: Putative phosphoesterase BCG9842_B4061 (172 aa).

Catalysis depends on H34, which acts as the Proton donor. Short sequence motifs (HXTX) lie at residues 34-37 (HITL) and 115-118 (HLTI). The active-site Proton acceptor is H115.

This sequence belongs to the 2H phosphoesterase superfamily. YjcG family.

The chain is Putative phosphoesterase BCG9842_B4061 from Bacillus cereus (strain G9842).